Here is a 708-residue protein sequence, read N- to C-terminus: Potassium-transporting ATPase ATP-binding subunit 2 (708 aa).

Residues 1-23 (MRSPSRLPHETRDSRQRTPKTDM) are disordered. Over residues 7 to 23 (LPHETRDSRQRTPKTDM) the composition is skewed to basic and acidic residues. A run of 4 helical transmembrane segments spans residues 49 to 69 (MFIV…PNLF), 84 to 104 (GLIT…EAVA), 235 to 255 (IALT…VATM), and 283 to 303 (SIAI…GGLL). The active-site 4-aspartylphosphate intermediate is Asp-339. ATP-binding positions include Asp-376, Glu-380, 407–414 (FSAKTRMS), and Lys-426. Asp-549 and Asp-553 together coordinate Mg(2+). Helical transmembrane passes span 619–639 (FAIL…IMGL), 645–665 (AIIS…PLAL), and 683–703 (IFIY…LIDV).

Belongs to the cation transport ATPase (P-type) (TC 3.A.3) family. Type IA subfamily. As to quaternary structure, the system is composed of three essential subunits: KdpA, KdpB and KdpC.

It is found in the cell inner membrane. The enzyme catalyses K(+)(out) + ATP + H2O = K(+)(in) + ADP + phosphate + H(+). Functionally, part of the high-affinity ATP-driven potassium transport (or Kdp) system, which catalyzes the hydrolysis of ATP coupled with the electrogenic transport of potassium into the cytoplasm. This subunit is responsible for energy coupling to the transport system and for the release of the potassium ions to the cytoplasm. The polypeptide is Potassium-transporting ATPase ATP-binding subunit 2 (Nostoc sp. (strain PCC 7120 / SAG 25.82 / UTEX 2576)).